The primary structure comprises 176 residues: Peptide methionine sulfoxide reductase B3 (176 aa).

An N-terminal signal peptide occupies residues 1–26 (MNIVNSKILFLSFTLLLLLQSSIVES). The region spanning 51–172 (DEEWRAILSP…NSVSLKFTPA (122 aa)) is the MsrB domain. Zn(2+)-binding residues include Cys-90, Cys-93, Cys-136, and Cys-139. A disulfide bond links Cys-108 and Cys-161. The Nucleophile role is filled by Cys-161.

The protein belongs to the MsrB Met sulfoxide reductase family. Zn(2+) serves as cofactor.

The protein localises to the endoplasmic reticulum. It catalyses the reaction L-methionyl-[protein] + [thioredoxin]-disulfide + H2O = L-methionyl-(R)-S-oxide-[protein] + [thioredoxin]-dithiol. Functionally, catalyzes the reduction of methionine sulfoxide (MetSO) to methionine in proteins. Plays a protective role against oxidative stress by restoring activity to proteins that have been inactivated by methionine oxidation. Involved in cold tolerance. Eliminates MetSO and reactive oxygen species that accumulate at the ER during cold acclimation. MSRB family specifically reduces the MetSO R-enantiomer. The polypeptide is Peptide methionine sulfoxide reductase B3 (MSRB3) (Arabidopsis thaliana (Mouse-ear cress)).